The sequence spans 821 residues: Phenylalanine--tRNA ligase beta subunit (821 aa).

Residues 39 to 149 enclose the tRNA-binding domain; the sequence is SENVKGIVLG…EDIALNHNLG (111 aa). The B5 domain maps to 414–507; the sequence is LKKILIPLRR…RLIGYDMFDL (94 aa). Positions 485, 491, 494, and 495 each coordinate Mg(2+). One can recognise an FDX-ACB domain in the interval 727-820; sequence PTVPKMERDI…IEKKFSTKLR (94 aa).

It belongs to the phenylalanyl-tRNA synthetase beta subunit family. Type 1 subfamily. Tetramer of two alpha and two beta subunits. Mg(2+) is required as a cofactor.

The protein resides in the cytoplasm. It carries out the reaction tRNA(Phe) + L-phenylalanine + ATP = L-phenylalanyl-tRNA(Phe) + AMP + diphosphate + H(+). The protein is Phenylalanine--tRNA ligase beta subunit of Prochlorococcus marinus subsp. pastoris (strain CCMP1986 / NIES-2087 / MED4).